Here is a 59-residue protein sequence, read N- to C-terminus: Large ribosomal subunit protein bL32 (59 aa).

A disordered region spans residues 1-28 (MAVQQNKKSPSKRGMHRAHDFLTDPPLA).

The protein belongs to the bacterial ribosomal protein bL32 family.

This chain is Large ribosomal subunit protein bL32, found in Aromatoleum aromaticum (strain DSM 19018 / LMG 30748 / EbN1) (Azoarcus sp. (strain EbN1)).